The sequence spans 501 residues: Probable cytosol aminopeptidase (501 aa).

Residues Lys-268 and Asp-273 each contribute to the Mn(2+) site. The active site involves Lys-280. Asp-291, Asp-350, and Glu-352 together coordinate Mn(2+). Residue Arg-354 is part of the active site.

This sequence belongs to the peptidase M17 family. It depends on Mn(2+) as a cofactor.

The protein localises to the cytoplasm. The enzyme catalyses Release of an N-terminal amino acid, Xaa-|-Yaa-, in which Xaa is preferably Leu, but may be other amino acids including Pro although not Arg or Lys, and Yaa may be Pro. Amino acid amides and methyl esters are also readily hydrolyzed, but rates on arylamides are exceedingly low.. The catalysed reaction is Release of an N-terminal amino acid, preferentially leucine, but not glutamic or aspartic acids.. Presumably involved in the processing and regular turnover of intracellular proteins. Catalyzes the removal of unsubstituted N-terminal amino acids from various peptides. This Colwellia psychrerythraea (strain 34H / ATCC BAA-681) (Vibrio psychroerythus) protein is Probable cytosol aminopeptidase.